A 106-amino-acid chain; its full sequence is uncharacterized protein (106 aa).

The interval methionine 1–arginine 23 is disordered. Residues serine 14–arginine 23 show a composition bias toward basic residues.

This is an uncharacterized protein from Treponema pallidum (strain Nichols).